The sequence spans 337 residues: DNA-directed RNA polymerase subunit alpha (337 aa).

Positions 1–233 (MVREKVTVST…DLFIPFLHME (233 aa)) are alpha N-terminal domain (alpha-NTD). Positions 265-337 (KKIALKSIFI…FVIDLAKNKF (73 aa)) are alpha C-terminal domain (alpha-CTD).

It belongs to the RNA polymerase alpha chain family. In plastids the minimal PEP RNA polymerase catalytic core is composed of four subunits: alpha, beta, beta', and beta''. When a (nuclear-encoded) sigma factor is associated with the core the holoenzyme is formed, which can initiate transcription.

It localises to the plastid. Its subcellular location is the chloroplast. The catalysed reaction is RNA(n) + a ribonucleoside 5'-triphosphate = RNA(n+1) + diphosphate. DNA-dependent RNA polymerase catalyzes the transcription of DNA into RNA using the four ribonucleoside triphosphates as substrates. The sequence is that of DNA-directed RNA polymerase subunit alpha from Solanum lycopersicum (Tomato).